The chain runs to 110 residues: UPF0339 protein PA0329 (110 aa).

Repeat copies occupy residues Ala-10–Val-58 and Ala-61–Glu-109. The tract at residues Glu-91 to Ser-110 is disordered.

This sequence belongs to the UPF0339 family. Duplicated subfamily.

This Pseudomonas aeruginosa (strain ATCC 15692 / DSM 22644 / CIP 104116 / JCM 14847 / LMG 12228 / 1C / PRS 101 / PAO1) protein is UPF0339 protein PA0329.